Reading from the N-terminus, the 875-residue chain is MYQTTAALRSAFLEYFRTNGHQVVDSSSLVPANDPTLLFTNAGMNQFKDVFLGADKRSYSRATSSQRCVRAGGKHNDLDNVGYTARHHTFFEMLGNFSFGDYFKEEAIHFAWTFLTEELKLPKERLCVTIYDTDDEAFEIWNKKIGVAAENIIRIGDNKGAAYASDNFWQMGDTGPCGPCSEIFYDHGDHIWGGRPGTPEEDGDRFIEIWNIVFMQYNRQADGEMKPLPKPSVDTGMGIERIAAIMQGVHSNYEIDIFQALIKKAAAILGVTDLENKSLRVIADHIRSCAFLIADGVMPSNEGRGYVLRRIIRRAVRHGNKLGATESFFYKLVPTLIEVMGADAAKGLQETQAIVEKSLKAEEEQFARTLERGLGILDAALNELATNVLDGETAFKLYDTYGFPVDLTADVCRERDITVDEAGFEVAMAAQRSRAQAAGQFETDYNEGLIIDEQSGFTGYTDLNNQATVTAIFKAGESVDSIVAGDDVVIVLDNTPFYGESGGQCGDEGVLIADGIEFTVTDTQKYGQAIGHIGRVATGTVKVGQVVTANVDKKLRHRTELNHSVTHLLHAALRQVLGTHVSQKGSLVDPERLRFDFSHFEGVKAHELKEVEELVNTQIRRNHELTAEVMDIETAKEKGAMALFGEKYDSEVRVVTMGDFSIELCGGTHVGRTGDIGLFKITSEGGIAAGIRRIEAVTGAAAMAYVAKQQAQLEEAAALLKGDSASVVAKLKAQLDKTKLLEKELSQLKDKLAAATSADLAGEAVDVNGVKVLVKKLEGVDAGALRGLQDELKQKLQSGIVVLAIAGEDKVNMIVGVTKDLTGKVKAGELVASIAVQVGGKGGGRPDMAQAGGSQPENLDAALEQVIPWISAKLA.

Positions 563, 567, 665, and 669 each coordinate Zn(2+).

It belongs to the class-II aminoacyl-tRNA synthetase family. Requires Zn(2+) as cofactor.

It localises to the cytoplasm. The enzyme catalyses tRNA(Ala) + L-alanine + ATP = L-alanyl-tRNA(Ala) + AMP + diphosphate. In terms of biological role, catalyzes the attachment of alanine to tRNA(Ala) in a two-step reaction: alanine is first activated by ATP to form Ala-AMP and then transferred to the acceptor end of tRNA(Ala). Also edits incorrectly charged Ser-tRNA(Ala) and Gly-tRNA(Ala) via its editing domain. This chain is Alanine--tRNA ligase, found in Shewanella pealeana (strain ATCC 700345 / ANG-SQ1).